Reading from the N-terminus, the 162-residue chain is Nitric oxide synthase, inducible (162 aa).

Residues 24–37 (LQYHSLSKQQNESP) are compositionally biased toward polar residues. The interval 24 to 65 (LQYHSLSKQQNESPQPLVGTGKKSPESLVKPDATPLSSPRHV) is disordered. Residues Cys-90 and Cys-95 each coordinate Zn(2+). (6R)-L-erythro-5,6,7,8-tetrahydrobiopterin is bound at residue Ser-98. Residue Glu-132 coordinates L-arginine. An FAD-binding site is contributed by His-160.

This sequence belongs to the NOS family. Homodimer. Interacts with NHERF1. Interacts with GAPDH; induced by oxidatively-modified low-densitity lipoprotein (LDL(ox)). Interacts with S100A8 and S100A9 to form the iNOS-S100A8/9 transnitrosylase complex. Interacts with SPSB1, SPSB2 and SPSB4. Interacts with ELOC and CUL5 in the presence of SPSB1 or SPSB2 or SPSB4. Forms a complex with ASL, ASS1 and HSP90AA1; the complex regulates cell-autonomous L-arginine synthesis and citrulline recycling while channeling extracellular L-arginine to nitric oxide synthesis pathway. It depends on heme b as a cofactor. FAD is required as a cofactor. Requires FMN as cofactor. (6R)-L-erythro-5,6,7,8-tetrahydrobiopterin serves as cofactor. In terms of processing, polyubiquitinated; mediated by SPSB1, SPSB2 and SPSB4, leading to proteasomal degradation.

It is found in the cytoplasm. Its subcellular location is the cytosol. It carries out the reaction 2 L-arginine + 3 NADPH + 4 O2 + H(+) = 2 L-citrulline + 2 nitric oxide + 3 NADP(+) + 4 H2O. With respect to regulation, regulated by calcium/calmodulin. Its function is as follows. Produces nitric oxide (NO) which is a messenger molecule with diverse functions throughout the body. In macrophages, NO mediates tumoricidal and bactericidal actions. Also has nitrosylase activity and mediates cysteine S-nitrosylation of cytoplasmic target proteins such PTGS2/COX2. As component of the iNOS-S100A8/9 transnitrosylase complex involved in the selective inflammatory stimulus-dependent S-nitrosylation of GAPDH implicated in regulation of the GAIT complex activity and probably multiple targets including ANXA5, EZR, MSN and VIM. Involved in inflammation, enhances the synthesis of pro-inflammatory mediators such as IL6 and IL8. The sequence is that of Nitric oxide synthase, inducible (NOS2) from Macaca mulatta (Rhesus macaque).